The sequence spans 60 residues: Cytotoxin 5 (60 aa).

Disulfide bonds link Cys-3–Cys-21, Cys-14–Cys-38, Cys-42–Cys-53, and Cys-54–Cys-59.

This sequence belongs to the three-finger toxin family. Short-chain subfamily. Type IA cytotoxin sub-subfamily. As to quaternary structure, monomer in solution; Homodimer and oligomer in the presence of negatively charged lipids forming a pore with a size ranging between 20 and 30 Angstroms. In terms of tissue distribution, expressed by the venom gland.

It localises to the secreted. Its subcellular location is the target cell membrane. Basic protein that binds to cell membrane and depolarizes cardiomyocytes. It also possesses lytic activity on many other cells, including red blood cells. Interaction with sulfatides in the cell membrane induces pore formation and cell internalization and is responsible for cytotoxicity in cardiomyocytes. It targets the mitochondrial membrane and induces mitochondrial swelling and fragmentation. Inhibits protein kinases C. It binds to the integrin alpha-V/beta-3 with a moderate affinity. Is cardiotoxic and cytocidal to Yoshida sarcoma cells. The protein is Cytotoxin 5 of Naja atra (Chinese cobra).